Reading from the N-terminus, the 61-residue chain is ERMES regulator 1 (61 aa).

At Met-1 to Ser-20 the chain is on the mitochondrial intermembrane side. Residues Tyr-21–Val-43 traverse the membrane as a helical segment. Residues Arg-44–Ser-61 are Cytoplasmic-facing.

This sequence belongs to the EMR1 family. As to quaternary structure, interacts with the ER-mitochondria encounter structure (ERMES) complex. Interacts with mdm12. Interacts with mdm34.

It localises to the mitochondrion outer membrane. In terms of biological role, mediates the formation of endoplasmic reticulum (ER)-mitochondria encounter structure (ERMES) foci, thereby contributing to the formation of ER-mitochondrial contact sites. The protein is ERMES regulator 1 of Schizosaccharomyces pombe (strain 972 / ATCC 24843) (Fission yeast).